A 219-amino-acid chain; its full sequence is RNA-free ribonuclease P (219 aa).

It belongs to the HARP family.

It catalyses the reaction Endonucleolytic cleavage of RNA, removing 5'-extranucleotides from tRNA precursor.. In terms of biological role, RNA-free RNase P that catalyzes the removal of the 5'-leader sequence from pre-tRNA to produce the mature 5'-terminus. The chain is RNA-free ribonuclease P from Staphylothermus marinus (strain ATCC 43588 / DSM 3639 / JCM 9404 / F1).